Reading from the N-terminus, the 387-residue chain is 3-ketoacyl-CoA thiolase (387 aa).

The Acyl-thioester intermediate role is filled by Cys-91. Residues His-343 and Cys-373 each act as proton acceptor in the active site.

Belongs to the thiolase-like superfamily. Thiolase family. In terms of assembly, heterotetramer of two alpha chains (FadB) and two beta chains (FadA).

Its subcellular location is the cytoplasm. The catalysed reaction is an acyl-CoA + acetyl-CoA = a 3-oxoacyl-CoA + CoA. It functions in the pathway lipid metabolism; fatty acid beta-oxidation. Its function is as follows. Catalyzes the final step of fatty acid oxidation in which acetyl-CoA is released and the CoA ester of a fatty acid two carbons shorter is formed. This Vibrio cholerae serotype O1 (strain ATCC 39315 / El Tor Inaba N16961) protein is 3-ketoacyl-CoA thiolase.